We begin with the raw amino-acid sequence, 107 residues long: uncharacterized protein (107 aa).

A disordered region spans residues 86–107 (KRAETARLPAATPQKRTGPARG).

This is an uncharacterized protein from Saccharomyces cerevisiae (strain ATCC 204508 / S288c) (Baker's yeast).